The chain runs to 348 residues: Fe-S cluster assembly protein DRE2 (348 aa).

Residues 1–162 (MSQYKTGLLL…KKASSSTSNL (162 aa)) form an N-terminal SAM-like domain region. The tract at residues 137–170 (KTNNTKLQSGSKLPTFKKASSSTSNLPSFKKADH) is disordered. Residues 144-163 (QSGSKLPTFKKASSSTSNLP) show a composition bias toward polar residues. A linker region spans residues 163–242 (PSFKKADHSR…EEELIDEDGS (80 aa)). Phosphoserine is present on serine 206. [2Fe-2S] cluster contacts are provided by cysteine 252, cysteine 263, cysteine 266, and cysteine 268. The interval 252-268 (CGKSKTKKKKACKDCTC) is fe-S binding site A. 4 residues coordinate [4Fe-4S] cluster: cysteine 311, cysteine 314, cysteine 322, and cysteine 325. 2 short sequence motifs (cx2C motif) span residues 311–314 (CGSC) and 322–325 (CSGC). Residues 311–325 (CGSCSLGDAFRCSGC) are fe-S binding site B.

Belongs to the anamorsin family. In terms of assembly, monomer. Interacts with TAH18. Interacts with MIA40. Requires [2Fe-2S] cluster as cofactor. It depends on [4Fe-4S] cluster as a cofactor.

It is found in the cytoplasm. It localises to the mitochondrion intermembrane space. Its function is as follows. Component of the cytosolic iron-sulfur (Fe-S) protein assembly (CIA) machinery required for the maturation of extramitochondrial Fe-S proteins. Part of an electron transfer chain functioning in an early step of cytosolic Fe-S biogenesis, facilitating the de novo assembly of a [4Fe-4S] cluster on the scaffold complex CFD1-NBP35. Electrons are transferred to DRE2 from NADPH via the FAD- and FMN-containing protein TAH18. TAH18-DRE2 are also required for the assembly of the diferric tyrosyl radical cofactor of ribonucleotide reductase (RNR), probably by providing electrons for reduction during radical cofactor maturation in the catalytic small subunit RNR2. The protein is Fe-S cluster assembly protein DRE2 of Saccharomyces cerevisiae (strain Lalvin EC1118 / Prise de mousse) (Baker's yeast).